The primary structure comprises 1527 residues: DNA-directed RNA polymerase subunit beta'' (1527 aa).

Zn(2+) contacts are provided by Cys220, Cys296, Cys303, and Cys306. Composition is skewed to basic and acidic residues over residues 644–661 and 671–681; these read RTQEEEYRTREEEYRTRE and PENKYRTREGE. 2 disordered regions span residues 644–681 and 712–793; these read RTQEEEYRTREEEYRTREEDSEDEYESPENKYRTREGE and YRTL…KKEG. 2 stretches are compositionally biased toward acidic residues: residues 737-755 and 763-786; these read GEYEILEEESEEEYGSSED and TLEEDSEEDSEEDSEDEYGSPEED.

It belongs to the RNA polymerase beta' chain family. RpoC2 subfamily. In terms of assembly, in plastids the minimal PEP RNA polymerase catalytic core is composed of four subunits: alpha, beta, beta', and beta''. When a (nuclear-encoded) sigma factor is associated with the core the holoenzyme is formed, which can initiate transcription. Requires Zn(2+) as cofactor.

The protein localises to the plastid. It localises to the chloroplast. It carries out the reaction RNA(n) + a ribonucleoside 5'-triphosphate = RNA(n+1) + diphosphate. Its function is as follows. DNA-dependent RNA polymerase catalyzes the transcription of DNA into RNA using the four ribonucleoside triphosphates as substrates. This chain is DNA-directed RNA polymerase subunit beta'', found in Zea mays (Maize).